Reading from the N-terminus, the 129-residue chain is Large-conductance mechanosensitive channel (129 aa).

A run of 3 helical transmembrane segments spans residues 8–28 (FAFR…AAFS), 30–50 (IIKS…IGGI), and 67–87 (GQFL…FLFV).

The protein belongs to the MscL family. Homopentamer.

It is found in the cell membrane. Its function is as follows. Channel that opens in response to stretch forces in the membrane lipid bilayer. May participate in the regulation of osmotic pressure changes within the cell. The protein is Large-conductance mechanosensitive channel of Exiguobacterium sibiricum (strain DSM 17290 / CCUG 55495 / CIP 109462 / JCM 13490 / 255-15).